Reading from the N-terminus, the 48-residue chain is Large ribosomal subunit protein eL40 (48 aa).

The protein belongs to the eukaryotic ribosomal protein eL40 family.

In Methanosphaera stadtmanae (strain ATCC 43021 / DSM 3091 / JCM 11832 / MCB-3), this protein is Large ribosomal subunit protein eL40.